The chain runs to 314 residues: DDRGK domain-containing protein 1 (314 aa).

The helical transmembrane segment at 1–28 (MVAPVWYLVAAALLVGFILFLTRSRGRA) threads the bilayer. The interval 1-114 (MVAPVWYLVA…VEKPAETHLS (114 aa)) is mediates interaction with CDK5RAP3. At 29–314 (ASAGQEPLHN…GRESPAQAPA (286 aa)) the chain is on the cytoplasmic side. Disordered stretches follow at residues 31-75 (AGQE…SRLQ) and 100-186 (QEEE…QREH). 2 positions are modified to phosphoserine: Ser72 and Ser114. The segment at 118–216 (GAKKLRKLEE…MTEEQSQSFL (99 aa)) is mediates interaction with TRIP4. Positions 124–186 (KLEEKQARKA…AREEQAQREH (63 aa)) are enriched in basic and acidic residues. A UFM1-interacting motif (UFIM) motif is present at residues 195-209 (AFVVEEEGVGETMTE). Residues 216–314 (LTEFINYIKQ…GRESPAQAPA (99 aa)) are mediates interaction with UFL1. The PCI domain occupies 229–273 (VLLEDLASQVGLRTQDTINRIQDLLAEGTITGVIDDRGKFIYITP). Lys267 participates in a covalent cross-link: Glycyl lysine isopeptide (Lys-Gly) (interchain with G-Cter in UFM1).

The protein belongs to the DDRGK1 family. As to quaternary structure, component of the UFM1 ribosome E3 ligase (UREL) complex, composed of UFL1, DDRGK1 and CDK5RAP3. Interacts with (unphosphorylated) ERN1/IRE1-alpha; interaction is dependent on UFM1 and takes place in response to endoplasmic reticulum stress, regulating ERN1/IRE1-alpha stability. Interacts with NFKBIA. Interacts with SOX9. Post-translationally, ubiquitinated. Ubiquitination probably triggers proteasomal degradation and is negatively regulated by UFL1, the enzyme involved in the ufmylation of DDRGK1. In terms of processing, ufmylated; conjugated to ubiquitin-like protein UFM1, probably at Lys-267 by UFL1. The relevance of ufmylation is however unclear: as DDRGK1 acts as a substrate adapters for ufmylation, it is uncertain whether ufmylation is a collateral effect of ufmylation process or is required to regulate its activity. Widely expressed (at protein level). In the brain, highest levels in medulla oblongata, followed by cerebral cortex, cerebellum and frontal lobe.

It is found in the endoplasmic reticulum membrane. In terms of biological role, component of the UFM1 ribosome E3 ligase (UREL) complex, a multiprotein complex that catalyzes ufmylation of endoplasmic reticulum-docked proteins. The UREL complex plays a key role in ribosome recycling by mediating mono-ufmylation of the RPL26/uL24 subunit of the 60S ribosome following ribosome dissociation: ufmylation weakens the junction between post-termination 60S subunits and SEC61 translocons, promoting release and recycling of the large ribosomal subunit from the endoplasmic reticulum membrane. Ufmylation of RPL26/uL24 and subsequent 60S ribosome recycling either take place after normal termination of translation or after ribosome stalling during cotranslational translocation at the endoplasmic reticulum. Within the UREL complex, DDRGK1 tethers the complex to the endoplasmic reticulum membrane to restrict its activity to endoplasmic reticulum-docked ribosomes and acts as an ufmylation 'reader': following RPL26/uL24 ufmylation, DDRGK1 specifically binds to ufmylated RPL26/uL24 via its UFIM motif, resulting in stable association between the 60S ribosome and the UREL complex, followed by dissociation of the 60S ribosome subunit from the endoplasmic reticulum membrane. The UREL complex is also involved in reticulophagy in response to endoplasmic reticulum stress by promoting ufmylation of proteins such as CYB5R3 and RPN1, thereby promoting lysosomal degradation of ufmylated proteins. Ufmylation-dependent reticulophagy inhibits the unfolded protein response (UPR) by regulating ERN1/IRE1-alpha stability. Acts as a regulator of immunity by promoting differentiation of B-cells into plasma cells: acts by promoting expansion of the endoplasmic reticulum and regulating the unfolded protein response (UPR). May also be required for TRIP4 ufmylation. May play a role in NF-kappa-B-mediated transcription through regulation of the phosphorylation and the degradation of NFKBIA, the inhibitor of NF-kappa-B. Plays a role in cartilage development through SOX9, inhibiting the ubiquitin-mediated proteasomal degradation of this transcriptional regulator. Required for stabilization and ufmylation of ATG9A. The protein is DDRGK domain-containing protein 1 of Homo sapiens (Human).